A 530-amino-acid chain; its full sequence is RNA-binding protein 39 (530 aa).

The disordered stretch occupies residues 1–146 (MADDIDIEAM…PVREPIDNLT (146 aa)). Ala2 carries the N-acetylalanine modification. A compositionally biased stretch (basic and acidic residues) spans 14–32 (PYKKDENKLNSANGHEERS). 2 stretches are compositionally biased toward basic residues: residues 33–56 (KKRKKSKSRSRSHERKRSKSKERK) and 64–95 (KKSKSRERKRSRSKERRRSRSRSRDRRFRGRY). The residue at position 95 (Tyr95) is a Phosphotyrosine. Ser97 and Ser100 each carry phosphoserine. Lys111 participates in a covalent cross-link: Glycyl lysine isopeptide (Lys-Gly) (interchain with G-Cter in SUMO2). Residue Ser117 is modified to Phosphoserine. Lys119 is covalently cross-linked (Glycyl lysine isopeptide (Lys-Gly) (interchain with G-Cter in SUMO2)). Basic residues predominate over residues 119-130 (KLSRRRSRSKSP). Phosphoserine is present on residues Ser121 and Ser136. Over residues 131-146 (FRKDKSPVREPIDNLT) the composition is skewed to basic and acidic residues. Thr146 carries the post-translational modification Phosphothreonine. The region spanning 153–230 (RTVFCMQLAA…VPIIVQASQA (78 aa)) is the RRM 1 domain. Lys244 participates in a covalent cross-link: Glycyl lysine isopeptide (Lys-Gly) (interchain with G-Cter in SUMO2). Positions 250–328 (MRLYVGSLHF…RPMKVGHVTE (79 aa)) constitute an RRM 2 domain. Residues 291–355 (KGYGFITFSD…RTGIDLGTTG (65 aa)) are activating domain. The segment at 291-406 (KGYGFITFSD…IDLQTRLSQQ (116 aa)) is interaction with JUN. Phosphoserine is present on residues Ser334, Ser337, and Ser341. The segment at 355-406 (GRLQLMARLAEGTGLQIPPAAQQALQMSGSLAFGAVAEFSFVIDLQTRLSQQ) is interaction with ESR1 and ESR2. The segment at 406 to 530 (QTEASALAAA…ATQLLVPSRR (125 aa)) is interaction with NCOA6. Residues 445-508 (EIKDDVIEEC…KMITAAYVPL (64 aa)) form the RRM 3 domain.

Belongs to the splicing factor SR family. As to quaternary structure, interacts with NCOA6 and JUN. Interacts with ESR1 and ESR2, in the presence of estradiol (E2). Interacts with RSRC1 (via Arg/Ser-rich domain). Interacts with SF3B1. Interacts with ZNF106 (via N-terminus).

It localises to the nucleus. In terms of biological role, RNA-binding protein that acts as a pre-mRNA splicing factor. Acts by promoting exon inclusion via regulation of exon cassette splicing. Also acts as a transcriptional coactivator for steroid nuclear receptors ESR1/ER-alpha and ESR2/ER-beta, and JUN/AP-1, independently of the pre-mRNA splicing factor activity. This is RNA-binding protein 39 (Rbm39) from Mus musculus (Mouse).